Consider the following 317-residue polypeptide: Olfactory receptor 2G2 (317 aa).

The Extracellular segment spans residues 1–28 (MGMVRHTNESNLAGFILLGFSDYPQLQK). Asparagine 8 is a glycosylation site (N-linked (GlcNAc...) asparagine). A helical transmembrane segment spans residues 29–52 (VLFVLILILYLLTILGNTTIILVS). The Cytoplasmic portion of the chain corresponds to 53–60 (RLEPKLHM). Residues 61 to 82 (PMYFFLSHLSFLYRCFTSSVIP) traverse the membrane as a helical segment. Residues 83–103 (QLLVNLWEPMKTIAYGGCLVH) lie on the Extracellular side of the membrane. A disulfide bridge links cysteine 100 with cysteine 192. The helical transmembrane segment at 104-123 (LYNSHALGSTECVLPAVMSC) threads the bilayer. Over 124 to 142 (DRYVAVCRPLHYTVLMHIH) the chain is Cytoplasmic. A helical transmembrane segment spans residues 143 to 161 (LCMALASMAWLSGIATTLV). Topologically, residues 162-198 (QSTLTLQLPFCGHRQVDHFICEVPVLIKLACVGTTFN) are extracellular. Residues 199-222 (EAELFVASILFLIVPVSFILVSSG) form a helical membrane-spanning segment. At 223–239 (YIAHAVLRIKSATRRQK) the chain is on the cytoplasmic side. The helical transmembrane segment at 240 to 262 (AFGTCFSHLTVVTIFYGTIIFMY) threads the bilayer. Over 263 to 275 (LQPAKSRSRDQGK) the chain is Extracellular. The helical transmembrane segment at 276–295 (FVSLFYTVVTRMLNPLIYTL) threads the bilayer. The Cytoplasmic portion of the chain corresponds to 296–317 (RIKEVKGALKKVLAKALGVNIL).

Belongs to the G-protein coupled receptor 1 family.

Its subcellular location is the cell membrane. Odorant receptor. The sequence is that of Olfactory receptor 2G2 (OR2G2) from Homo sapiens (Human).